The sequence spans 231 residues: NADH-ubiquinone oxidoreductase chain 4 (231 aa).

A run of 7 helical transmembrane segments spans residues 1 to 21 (PIAG…YGII), 34 to 54 (LFIP…LTCL), 61 to 80 (SLIA…AVII), 84 to 106 (WGLS…LFCL), 118 to 138 (ILIL…WWLL), 156 to 176 (LLIV…LGLS), and 211 to 231 (LLMI…ELVI).

It belongs to the complex I subunit 4 family.

Its subcellular location is the mitochondrion membrane. It carries out the reaction a ubiquinone + NADH + 5 H(+)(in) = a ubiquinol + NAD(+) + 4 H(+)(out). In terms of biological role, core subunit of the mitochondrial membrane respiratory chain NADH dehydrogenase (Complex I) that is believed to belong to the minimal assembly required for catalysis. Complex I functions in the transfer of electrons from NADH to the respiratory chain. The immediate electron acceptor for the enzyme is believed to be ubiquinone. The polypeptide is NADH-ubiquinone oxidoreductase chain 4 (MT-ND4) (Hypnale hypnale (Merrem's hump-nosed viper)).